Consider the following 115-residue polypeptide: Large ribosomal subunit protein bL19 (115 aa).

This sequence belongs to the bacterial ribosomal protein bL19 family.

Its function is as follows. This protein is located at the 30S-50S ribosomal subunit interface and may play a role in the structure and function of the aminoacyl-tRNA binding site. This Streptococcus sanguinis (strain SK36) protein is Large ribosomal subunit protein bL19.